The following is a 222-amino-acid chain: Large ribosomal subunit protein uL1 (222 aa).

This sequence belongs to the universal ribosomal protein uL1 family. As to quaternary structure, part of the 50S ribosomal subunit.

In terms of biological role, binds directly to 23S rRNA. Probably involved in E site tRNA release. Protein L1 is also a translational repressor protein, it controls the translation of its operon by binding to its mRNA. The polypeptide is Large ribosomal subunit protein uL1 (Pyrobaculum neutrophilum (strain DSM 2338 / JCM 9278 / NBRC 100436 / V24Sta) (Thermoproteus neutrophilus)).